A 313-amino-acid polypeptide reads, in one-letter code: D-alanine--D-alanine ligase (313 aa).

One can recognise an ATP-grasp domain in the interval 108 to 308; the sequence is KLVWQQTGVP…YSELVVKVLS (201 aa). Position 138–193 (138–193) interacts with ATP; it reads VAKLGLPLFVKPASEGSSVAVLKVKTADALPAALSEAATHDKIVIVEKSIEGGGEY. Mg(2+) is bound by residues aspartate 262, glutamate 275, and asparagine 277.

This sequence belongs to the D-alanine--D-alanine ligase family. The cofactor is Mg(2+). Mn(2+) serves as cofactor.

The protein localises to the cytoplasm. It carries out the reaction 2 D-alanine + ATP = D-alanyl-D-alanine + ADP + phosphate + H(+). It participates in cell wall biogenesis; peptidoglycan biosynthesis. Functionally, cell wall formation. The chain is D-alanine--D-alanine ligase from Burkholderia ambifaria (strain MC40-6).